The chain runs to 322 residues: Endochitinase CH25 (322 aa).

A signal peptide spans 1–20 (MKSCLLLFLIFSFLLSFSLA). Residues 21–62 (EQCGRQAGGALCPNGLCCSEFGWCGDTEAYCKQPGCQSQCGG) form the Chitin-binding type-1 domain. Intrachain disulfides connect C23–C38, C32–C44, C37–C51, C56–C60, C92–C154, C166–C174, and C273–C305. The active-site Proton donor is E136.

This sequence belongs to the glycosyl hydrolase 19 family. Chitinase class I subfamily. In terms of tissue distribution, high expression in roots, moderate in floral tissues and low in stems and leaves.

It carries out the reaction Random endo-hydrolysis of N-acetyl-beta-D-glucosaminide (1-&gt;4)-beta-linkages in chitin and chitodextrins.. In Brassica napus (Rape), this protein is Endochitinase CH25.